The primary structure comprises 390 residues: Two-component response regulator ORR29 (390 aa).

In terms of domain architecture, Response regulatory spans 13–130 (SAMVIDEDKC…TIKNLWQYVD (118 aa)). The residue at position 65 (aspartate 65) is a 4-aspartylphosphate. The myb-like GARP DNA-binding region spans 169-226 (KKYYLMWTPHLQKKFLHALQILGKDASPKNIKKIMGVDNIDCRQIAAHLQKHRLRLTK). 2 disordered regions span residues 233 to 271 (FTTDTSKDESNSRIGPAESHHVCRNASTLQPRSNTQPTE) and 303 to 339 (SKHSSDPSGDEDEQVVVGGDQDGCANEANDIDSSGDH). Positions 257 to 271 (NASTLQPRSNTQPTE) are enriched in polar residues.

The protein belongs to the ARR family. Type-B subfamily. Two-component system major event consists of a His-to-Asp phosphorelay between a sensor histidine kinase (HK) and a response regulator (RR). In plants, the His-to-Asp phosphorelay involves an additional intermediate named Histidine-containing phosphotransfer protein (HPt). This multistep phosphorelay consists of a His-Asp-His-Asp sequential transfer of a phosphate group between first a His and an Asp of the HK protein, followed by the transfer to a conserved His of the HPt protein and finally the transfer to an Asp in the receiver domain of the RR protein.

It localises to the cytoplasm. The protein resides in the cytosol. It is found in the nucleus. Its function is as follows. Transcriptional activator that binds specific DNA sequence. Functions as a response regulator involved in His-to-Asp phosphorelay signal transduction system. Phosphorylation of the Asp residue in the receiver domain activates the ability of the protein to promote the transcription of target genes. May directly activate some type-A response regulators in response to cytokinins. Functions as a response regulator in response to cytokinins. The sequence is that of Two-component response regulator ORR29 from Oryza sativa subsp. japonica (Rice).